Here is a 724-residue protein sequence, read N- to C-terminus: Probable metal-nicotianamine transporter YSL8 (724 aa).

Residues 1 to 58 form a disordered region; sequence MRKGGLTPDRDRQIEEHELQETGISPDIERLKRNINATPYQREEEEEDREEQEESVEG. Positions 8 to 20 are enriched in basic and acidic residues; it reads PDRDRQIEEHELQ. The residue at position 25 (serine 25) is a Phosphoserine. Residues 43–56 show a composition bias toward acidic residues; it reads EEEEEDREEQEESV. Transmembrane regions (helical) follow at residues 72–92, 96–116, 144–164, 184–204, 245–265, 304–324, and 349–369; these read LTIR…FIVM, LTTG…FFFV, CVVA…LFAM, LGWM…SVVP, VLGK…FFTA, IINI…WPLI, and VFIA…KVLI. Positions 386–407 are disordered; the sequence is RSSLAHKEDPPASPASPLTPRI. The next 8 helical transmembrane spans lie at 423-443, 455-475, 478-497, 501-520, 541-561, 603-623, 641-661, and 679-699; these read IPSW…TAIL, IIVI…GAGL, WSLA…AWAG, GGLL…VSTA, FVSQ…VFWL, LMLC…KDCL, FFLG…LFVW, and GLIC…IAGV.

The protein belongs to the YSL (TC 2.A.67.2) family.

The protein resides in the membrane. May be involved in the transport of nicotianamine-chelated metals. The protein is Probable metal-nicotianamine transporter YSL8 (YSL8) of Arabidopsis thaliana (Mouse-ear cress).